We begin with the raw amino-acid sequence, 242 residues long: MKILLIGYGAMNQRVARLAEEQGHEITGIIVPDKNNNYPYPTFEHISDAEGADVAIDFSNPELLLPLLDEDFELPLVVATTGEKEKITEKLEELSQKMPVFFSANMSYGIHVLTKLLEVAVPLLEGYDIELIEAHHNKKVDAPSGTLVKLYDVIKELKDNVNPVYDRHEKNEKRQPDDIGISAIRGGTIVGEHDVLFAGVDETIELTHRAQSKDIFANGALKAAERLVTKPKGYYTFDNINN.

NAD(+) is bound by residues 79 to 81 (ATT) and 103 to 106 (SANM). The Proton donor/acceptor role is filled by His-135. A (S)-2,3,4,5-tetrahydrodipicolinate-binding site is contributed by His-136. Lys-139 serves as the catalytic Proton donor. 145–146 (GT) lines the (S)-2,3,4,5-tetrahydrodipicolinate pocket.

It belongs to the DapB family.

The protein resides in the cytoplasm. The catalysed reaction is (S)-2,3,4,5-tetrahydrodipicolinate + NAD(+) + H2O = (2S,4S)-4-hydroxy-2,3,4,5-tetrahydrodipicolinate + NADH + H(+). It catalyses the reaction (S)-2,3,4,5-tetrahydrodipicolinate + NADP(+) + H2O = (2S,4S)-4-hydroxy-2,3,4,5-tetrahydrodipicolinate + NADPH + H(+). Its pathway is amino-acid biosynthesis; L-lysine biosynthesis via DAP pathway; (S)-tetrahydrodipicolinate from L-aspartate: step 4/4. In terms of biological role, catalyzes the conversion of 4-hydroxy-tetrahydrodipicolinate (HTPA) to tetrahydrodipicolinate. The sequence is that of 4-hydroxy-tetrahydrodipicolinate reductase from Staphylococcus carnosus (strain TM300).